The chain runs to 152 residues: MSSLAFNYIVNLLSRREYSEFELRNKMQEKNFSEEEIDDALSLCQAKNWQSDRRFSENYLNSRSQKGCGVGRIRQELRQLKGVSSDIIDEVLMESEIDWYEMAENLLRKKFPNYNEQQTSKMKQKIWQYMLSHGFRSDEFADLIGQNQSEWD.

It belongs to the RecX family.

It localises to the cytoplasm. Functionally, modulates RecA activity. The sequence is that of Regulatory protein RecX from Haemophilus influenzae (strain 86-028NP).